An 81-amino-acid polypeptide reads, in one-letter code: Sulfur carrier protein TusA (81 aa).

The active-site Cysteine persulfide intermediate is Cys-19.

The protein belongs to the sulfur carrier protein TusA family.

Its subcellular location is the cytoplasm. In terms of biological role, sulfur carrier protein which probably makes part of a sulfur-relay system. The sequence is that of Sulfur carrier protein TusA from Shewanella sp. (strain MR-4).